A 278-amino-acid chain; its full sequence is Deoxyuridine 5'-triphosphate nucleotidohydrolase (278 aa).

Substrate is bound by residues 171–173 (RSG) and 273–274 (FG).

The protein belongs to the dUTPase family. Mg(2+) is required as a cofactor.

The catalysed reaction is dUTP + H2O = dUMP + diphosphate + H(+). Functionally, involved in nucleotide metabolism: produces dUMP, the immediate precursor of thymidine nucleotides and decreases the intracellular concentration of dUTP to avoid uracil incorporation into viral DNA. This Homo sapiens (Human) protein is Deoxyuridine 5'-triphosphate nucleotidohydrolase.